We begin with the raw amino-acid sequence, 66 residues long: Omega conotoxin-CVIE (66 aa).

An N-terminal signal peptide occupies residues 1–17 (VVIVAVLLLTACQLITA). The propeptide occupies 18-40 (NDSRGTQKHRALRSDTKLSMSTR). Intrachain disulfides connect Cys41/Cys56, Cys48/Cys60, and Cys55/Cys65. A Cysteine amide modification is found at Cys65.

The protein belongs to the conotoxin O1 superfamily. As to expression, expressed by the venom duct.

The protein resides in the secreted. Functionally, omega-conotoxins act at presynaptic membranes, they bind and block voltage-gated calcium channels. This toxin blocks N-type calcium channels (Cav2.2/CACNA1B). It shows a higher potency when Cav2.2/CACNA1B is only expressed with the ancillary subunit CACNB3 (IC(50)=0.12 nM) than on Cav2.2/CACNA1B expressed with the ancillary subunits CACNA2D1 and CACNB3 (IC(50)=2.6 nM). The Cav2.2/CACNA1B block by this toxin is voltage-independent, whereas the recovery from toxin block is voltage-dependent. There is a low recovery at physiological membrane potential and a high recovery with hyperpolarized potential. This indicates that the toxin has a higher affinity for Cav2.2/CACNA1B in the inactivated state. It is noteworthy that ancillary subunits beta modulate recovery from this toxin block. Cav2.2/CACNA1B expressed with the ancillary subunit CACNB2a (isoform 2a) almost recover completely from this toxin block, whereas Cav2.2/CACNA1B expressed with CACNB3 exhibits relatively weak recovery. Inhibition by this toxin of excitatory synaptic transmission is reversible. In vivo, when tested on rat model of persistent pain, this toxin blocks chronic pain behavior. The chain is Omega conotoxin-CVIE from Conus catus (Cat cone).